The chain runs to 520 residues: Cytochrome P450 6d3 (520 aa).

A heme-binding site is contributed by Cys461.

The protein belongs to the cytochrome P450 family. The cofactor is heme.

It localises to the endoplasmic reticulum membrane. Its subcellular location is the microsome membrane. Its function is as follows. Metabolizes pyrethroid insecticides and other xenobiotics. This chain is Cytochrome P450 6d3 (CYP6D3), found in Musca domestica (House fly).